The sequence spans 268 residues: Homeobox protein Hox-D12 (268 aa).

A disordered region spans residues 102 to 124; that stretch reads TPDAPTASEERSRTRPPFAPESS. The segment at residues 200–259 is a DNA-binding region (homeobox); that stretch reads ARKKRKPYTKQQIAELENEFLVNEFINRQKRKELSNRLNLSDQQVKIWFQNRRMKKKRVV.

This sequence belongs to the Abd-B homeobox family.

It is found in the nucleus. Sequence-specific transcription factor which is part of a developmental regulatory system that provides cells with specific positional identities on the anterior-posterior axis. The protein is Homeobox protein Hox-D12 (Hoxd12) of Mus musculus (Mouse).